A 443-amino-acid chain; its full sequence is Tol-Pal system protein TolB (443 aa).

The first 18 residues, 1 to 18, serve as a signal peptide directing secretion; it reads MRNIVYFILTLFSLTSYA.

It belongs to the TolB family. As to quaternary structure, the Tol-Pal system is composed of five core proteins: the inner membrane proteins TolA, TolQ and TolR, the periplasmic protein TolB and the outer membrane protein Pal. They form a network linking the inner and outer membranes and the peptidoglycan layer.

The protein localises to the periplasm. Part of the Tol-Pal system, which plays a role in outer membrane invagination during cell division and is important for maintaining outer membrane integrity. In Rickettsia prowazekii (strain Madrid E), this protein is Tol-Pal system protein TolB.